A 364-amino-acid polypeptide reads, in one-letter code: Beta-parvin (364 aa).

The interval Met-1 to Leu-57 is disordered. Phosphoserine is present on Ser-7. Over residues Arg-36–Lys-46 the composition is skewed to basic and acidic residues. Phosphoserine is present on Ser-54. Calponin-homology (CH) domains lie at Lys-87–Arg-194 and Ser-254–Lys-361.

It belongs to the parvin family. As to quaternary structure, interacts with DYSF. Interacts with ILK, ARHGEF6, PXN (via LD motifs), ACTN2 and actin. In terms of tissue distribution, expressed predominantly in heart and skeletal muscle.

The protein resides in the cell junction. It localises to the focal adhesion. It is found in the cell membrane. Its subcellular location is the cytoplasm. The protein localises to the cytoskeleton. The protein resides in the cell projection. It localises to the lamellipodium. It is found in the myofibril. Its subcellular location is the sarcomere. The protein localises to the z line. Its function is as follows. Adapter protein that plays a role in integrin signaling via ILK and in activation of the GTPases CDC42 and RAC1 by guanine exchange factors, such as ARHGEF6. Is involved in the reorganization of the actin cytoskeleton and formation of lamellipodia. Plays a role in cell adhesion, cell spreading, establishment or maintenance of cell polarity, and cell migration. This chain is Beta-parvin (PARVB), found in Homo sapiens (Human).